We begin with the raw amino-acid sequence, 115 residues long: Small ribosomal subunit protein bS6 (115 aa).

This sequence belongs to the bacterial ribosomal protein bS6 family.

Its function is as follows. Binds together with bS18 to 16S ribosomal RNA. The chain is Small ribosomal subunit protein bS6 from Picosynechococcus sp. (strain ATCC 27264 / PCC 7002 / PR-6) (Agmenellum quadruplicatum).